Here is a 490-residue protein sequence, read N- to C-terminus: Cytochrome P450 2C55 (490 aa).

Cys-435 is a binding site for heme.

The protein belongs to the cytochrome P450 family. It depends on heme as a cofactor. In terms of tissue distribution, highest level in colon. Low levels in liver and small intestine.

It is found in the endoplasmic reticulum membrane. It localises to the microsome membrane. The catalysed reaction is an organic molecule + reduced [NADPH--hemoprotein reductase] + O2 = an alcohol + oxidized [NADPH--hemoprotein reductase] + H2O + H(+). Functionally, metabolizes arachidonic acid mainly to 19-hydroxyeicosatetraenoic acid (HETE). This is Cytochrome P450 2C55 from Mus musculus (Mouse).